The sequence spans 326 residues: tRNA-modifying protein YgfZ (326 aa).

Folate-binding residues include tryptophan 27 and tryptophan 189.

This sequence belongs to the tRNA-modifying YgfZ family.

The protein localises to the cytoplasm. Functionally, folate-binding protein involved in regulating the level of ATP-DnaA and in the modification of some tRNAs. It is probably a key factor in regulatory networks that act via tRNA modification, such as initiation of chromosomal replication. This Escherichia coli O127:H6 (strain E2348/69 / EPEC) protein is tRNA-modifying protein YgfZ.